We begin with the raw amino-acid sequence, 682 residues long: Probable xyloglucan glycosyltransferase 6 (682 aa).

2 helical membrane-spanning segments follow: residues 109–129 (LIKGFLVVVVLLLCFELAAYF) and 173–193 (IVLFLIQSVDRLVLVLGCFWI). The active site involves aspartate 260. Residues aspartate 319 and aspartate 321 each coordinate substrate. Aspartate 413 is an active-site residue. Transmembrane regions (helical) follow at residues 491 to 511 (LILPFYSFTLFCVILPLTMFF) and 516 to 536 (LPSWVVCYIPGIMSILNIIPA). Serine 608 is modified (phosphoserine). Transmembrane regions (helical) follow at residues 632 to 651 (LYRTEIALAFILLAASVRSL) and 657 to 677 (IHFYFLLFQGITFVIVGLDLI).

It belongs to the glycosyltransferase 2 family. Plant cellulose synthase-like C subfamily. As to quaternary structure, homodimer. As to expression, mainly expressed in flowers and seeds, and, to a lower extent, in seedlings, roots, leaves and stems.

It is found in the golgi apparatus membrane. In terms of biological role, probable beta-1,4-glucan synthase rather involved in the synthesis of the xyloglucan backbone than cellulose. Seems to work simultaneously with xyloglucan 6-xylosyltransferase. Xyloglucan is a noncellulosic polysaccharides of plant cell wall and consists of a glucan backbone substituted by xylose, galactose and fucose. This is Probable xyloglucan glycosyltransferase 6 from Arabidopsis thaliana (Mouse-ear cress).